The following is a 541-amino-acid chain: Membrane protein insertase YidC (541 aa).

Residues 7 to 27 form a helical membrane-spanning segment; the sequence is ILLLALALVSFLLFQQWQVET. Positions 34–55 are enriched in polar residues; that stretch reads TVSTVQQTHKNGDVPTSSTANS. A disordered region spans residues 34-59; that stretch reads TVSTVQQTHKNGDVPTSSTANSDAPV. The next 4 membrane-spanning stretches (helical) occupy residues 343–363, 418–438, 456–476, and 495–515; these read SFIQ…TFIV, LGGC…YWAL, LSAQ…MFLI, and FIPV…VLYW.

The protein belongs to the OXA1/ALB3/YidC family. Type 1 subfamily. Interacts with the Sec translocase complex via SecD. Specifically interacts with transmembrane segments of nascent integral membrane proteins during membrane integration.

Its subcellular location is the cell inner membrane. Required for the insertion and/or proper folding and/or complex formation of integral membrane proteins into the membrane. Involved in integration of membrane proteins that insert both dependently and independently of the Sec translocase complex, as well as at least some lipoproteins. Aids folding of multispanning membrane proteins. The protein is Membrane protein insertase YidC of Aliivibrio salmonicida (strain LFI1238) (Vibrio salmonicida (strain LFI1238)).